Reading from the N-terminus, the 224-residue chain is Transcriptional regulatory protein TctD (224 aa).

Residues 2–116 (RLLLAEDNRE…ELDARLRALL (115 aa)) enclose the Response regulatory domain. Asp-51 is modified (4-aspartylphosphate). Positions 121–219 (GQVHEVQQLG…LRGLGYVLER (99 aa)) form a DNA-binding region, ompR/PhoB-type.

In terms of biological role, transcriptional activator of the tctI tricarboxylate transport system operon. The protein is Transcriptional regulatory protein TctD (tctD) of Salmonella typhimurium (strain SL1344).